The primary structure comprises 373 residues: STE20-related kinase adapter protein alpha (373 aa).

The Protein kinase domain maps to 11 to 321 (YELLTVIGKG…ASTLLNHSFF (311 aa)). Positions 255–281 (STSRSAANSGLSESLAPSTPRTSNGDS) are enriched in polar residues. The segment at 255-288 (STSRSAANSGLSESLAPSTPRTSNGDSPSHPYHR) is disordered. Residue threonine 361 is modified to Phosphothreonine; by LKB1.

It belongs to the protein kinase superfamily. STE Ser/Thr protein kinase family. STE20 subfamily. As to quaternary structure, component of a trimeric complex composed of STK11/LKB1, STRAD (STRADA or STRADB) and CAB39/MO25 (CAB39/MO25alpha or CAB39L/MO25beta): the complex tethers STK11/LKB1 in the cytoplasm and stimulates its catalytic activity.

It is found in the nucleus. The protein localises to the cytoplasm. Its function is as follows. Pseudokinase which, in complex with CAB39/MO25 (CAB39/MO25alpha or CAB39L/MO25beta), binds to and activates STK11/LKB1. Adopts a closed conformation typical of active protein kinases and binds STK11/LKB1 as a pseudosubstrate, promoting conformational change of STK11/LKB1 in an active conformation. The polypeptide is STE20-related kinase adapter protein alpha (STRADA) (Bos taurus (Bovine)).